The following is an 82-amino-acid chain: Small ribosomal subunit protein uS17 (82 aa).

This sequence belongs to the universal ribosomal protein uS17 family. Part of the 30S ribosomal subunit.

Its function is as follows. One of the primary rRNA binding proteins, it binds specifically to the 5'-end of 16S ribosomal RNA. The protein is Small ribosomal subunit protein uS17 of Rhodopseudomonas palustris (strain HaA2).